Consider the following 236-residue polypeptide: Small ribosomal subunit protein uS3 (236 aa).

The KH type-2 domain occupies 39–107; the sequence is IREFLTEELK…DTSLNIVEVR (69 aa). The segment at 214-236 is disordered; it reads ASERRAVEGDNQGSSSNRRRENA.

The protein belongs to the universal ribosomal protein uS3 family. As to quaternary structure, part of the 30S ribosomal subunit. Forms a tight complex with proteins S10 and S14.

Functionally, binds the lower part of the 30S subunit head. Binds mRNA in the 70S ribosome, positioning it for translation. This chain is Small ribosomal subunit protein uS3, found in Brucella suis (strain ATCC 23445 / NCTC 10510).